Consider the following 187-residue polypeptide: Elongation factor P (187 aa).

This sequence belongs to the elongation factor P family.

The protein localises to the cytoplasm. The protein operates within protein biosynthesis; polypeptide chain elongation. Involved in peptide bond synthesis. Stimulates efficient translation and peptide-bond synthesis on native or reconstituted 70S ribosomes in vitro. Probably functions indirectly by altering the affinity of the ribosome for aminoacyl-tRNA, thus increasing their reactivity as acceptors for peptidyl transferase. The chain is Elongation factor P from Desulfosudis oleivorans (strain DSM 6200 / JCM 39069 / Hxd3) (Desulfococcus oleovorans).